Consider the following 250-residue polypeptide: Small ribosomal subunit protein uS3 (250 aa).

In terms of domain architecture, KH type-2 spans 39 to 107 (VREFLTKKLK…PAQVSINEID (69 aa)). Residues 215-250 (MNPAPAEERPAKRGRGRGEGQERRGRRGDRAADKGE) form a disordered region. The segment covering 220–250 (AEERPAKRGRGRGEGQERRGRRGDRAADKGE) has biased composition (basic and acidic residues).

This sequence belongs to the universal ribosomal protein uS3 family. In terms of assembly, part of the 30S ribosomal subunit. Forms a tight complex with proteins S10 and S14.

Binds the lower part of the 30S subunit head. Binds mRNA in the 70S ribosome, positioning it for translation. This Acinetobacter baumannii (strain SDF) protein is Small ribosomal subunit protein uS3.